Here is a 346-residue protein sequence, read N- to C-terminus: UPF0053 protein sll1254 (346 aa).

The next 4 helical transmembrane spans lie at 1-21 (MLEI…CSCA), 58-78 (IGTI…TIGA), 87-107 (AWMG…GEII), and 121-141 (LLIA…VWLI). Residues 1–179 (MLEIVAAIFI…YKEGVIEGDE (179 aa)) form the CNNM transmembrane domain. 2 CBS domains span residues 198-259 (MTPR…GYKT) and 263-320 (LARP…IVDE).

It belongs to the UPF0053 family.

The protein resides in the cell membrane. The chain is UPF0053 protein sll1254 from Synechocystis sp. (strain ATCC 27184 / PCC 6803 / Kazusa).